The sequence spans 367 residues: Peptide chain release factor 2 (367 aa).

An N5-methylglutamine modification is found at Gln-250.

This sequence belongs to the prokaryotic/mitochondrial release factor family. Post-translationally, methylated by PrmC. Methylation increases the termination efficiency of RF2.

Its subcellular location is the cytoplasm. In terms of biological role, peptide chain release factor 2 directs the termination of translation in response to the peptide chain termination codons UGA and UAA. In Saccharopolyspora erythraea (strain ATCC 11635 / DSM 40517 / JCM 4748 / NBRC 13426 / NCIMB 8594 / NRRL 2338), this protein is Peptide chain release factor 2.